The following is a 353-amino-acid chain: Farnesyl pyrophosphate synthase (353 aa).

Lysine 57, arginine 60, and glutamine 96 together coordinate isopentenyl diphosphate. Lysine 57 is modified (N6-(2-hydroxyisobutyryl)lysine; alternate). N6-acetyllysine; alternate is present on lysine 57. Mg(2+) contacts are provided by aspartate 103 and aspartate 107. Position 112 (arginine 112) interacts with dimethylallyl diphosphate. Arginine 113 is an isopentenyl diphosphate binding site. Dimethylallyl diphosphate is bound by residues lysine 200, threonine 201, glutamine 240, lysine 257, and lysine 266.

It belongs to the FPP/GGPP synthase family. Homodimer. Interacts with RSAD2. Mg(2+) serves as cofactor. Testis, liver, kidney, brain and adrenal gland.

It is found in the cytoplasm. It catalyses the reaction isopentenyl diphosphate + dimethylallyl diphosphate = (2E)-geranyl diphosphate + diphosphate. The catalysed reaction is isopentenyl diphosphate + (2E)-geranyl diphosphate = (2E,6E)-farnesyl diphosphate + diphosphate. It participates in isoprenoid biosynthesis; farnesyl diphosphate biosynthesis; farnesyl diphosphate from geranyl diphosphate and isopentenyl diphosphate: step 1/1. It functions in the pathway isoprenoid biosynthesis; geranyl diphosphate biosynthesis; geranyl diphosphate from dimethylallyl diphosphate and isopentenyl diphosphate: step 1/1. With respect to regulation, inactivated by interferon-induced RSAD2. This inactivation may result of disruption of lipid rafts at the plasma membrane, and thus have an antiviral effect since many enveloped viruses need lipid rafts to bud efficiently out of the cell. Its function is as follows. Key enzyme in isoprenoid biosynthesis which catalyzes the formation of farnesyl diphosphate (FPP), a precursor for several classes of essential metabolites including sterols, dolichols, carotenoids, and ubiquinones. FPP also serves as substrate for protein farnesylation and geranylgeranylation. Catalyzes the sequential condensation of isopentenyl pyrophosphate with the allylic pyrophosphates, dimethylallyl pyrophosphate, and then with the resultant geranylpyrophosphate to the ultimate product farnesyl pyrophosphate. The chain is Farnesyl pyrophosphate synthase (Fdps) from Rattus norvegicus (Rat).